The primary structure comprises 173 residues: Large ribosomal subunit protein uL16 (173 aa).

This sequence belongs to the universal ribosomal protein uL16 family.

The sequence is that of Large ribosomal subunit protein uL16 from Methanococcus maripaludis (strain DSM 14266 / JCM 13030 / NBRC 101832 / S2 / LL).